Consider the following 140-residue polypeptide: Holo-[acyl-carrier-protein] synthase (140 aa).

The Mg(2+) site is built by Asp-8 and Glu-62.

This sequence belongs to the P-Pant transferase superfamily. AcpS family. Requires Mg(2+) as cofactor.

The protein localises to the cytoplasm. It catalyses the reaction apo-[ACP] + CoA = holo-[ACP] + adenosine 3',5'-bisphosphate + H(+). Its function is as follows. Transfers the 4'-phosphopantetheine moiety from coenzyme A to a Ser of acyl-carrier-protein. The chain is Holo-[acyl-carrier-protein] synthase from Cupriavidus taiwanensis (strain DSM 17343 / BCRC 17206 / CCUG 44338 / CIP 107171 / LMG 19424 / R1) (Ralstonia taiwanensis (strain LMG 19424)).